The sequence spans 85 residues: MKMTLIAILTCAAVLVLHTTAAEELEAESQLMEVGMPDTELEAVDEERLFECSVSCEIEKEGDKDCKKKKCKGGWKCKFNMCVKV.

Positions 1-22 are cleaved as a signal peptide; that stretch reads MKMTLIAILTCAAVLVLHTTAA. Positions 23 to 48 are excised as a propeptide; that stretch reads EELEAESQLMEVGMPDTELEAVDEER. Cystine bridges form between Cys52–Cys66, Cys56–Cys77, and Cys71–Cys82.

The protein belongs to the neurotoxin 12 (Hwtx-2) family. 02 (Hwtx-2) subfamily. As to expression, expressed by the venom gland.

The protein resides in the secreted. Functionally, postsynaptic neurotoxin. The polypeptide is U4-theraphotoxin-Hhn1z (Cyriopagopus hainanus (Chinese bird spider)).